The primary structure comprises 2104 residues: 5'-3' DNA helicase ZGRF1 (2104 aa).

Positions 335–345 (SSPIHSSTVDG) are enriched in polar residues. The interval 335 to 359 (SSPIHSSTVDGNDTERKPKAQEDDV) is disordered. Phosphoserine is present on S336. Over residues 347–356 (DTERKPKAQE) the composition is skewed to basic and acidic residues. Residues S793 and S864 each carry the phosphoserine modification. C1349, H1351, C1374, and C1382 together coordinate Zn(2+). The GRF-type zinc-finger motif lies at 1349 to 1391 (CHHSQPAKLVMVKKEGPNKGRLFYTCDGPKADRCKFFKWLEDV). The tract at residues 2085–2104 (VEEKQKKKSEKEKSKDKSHS) is disordered.

In terms of assembly, interacts with DNA repair protein RAD51; the interaction promotes RAD51 strand exchange activity. Also interacts with DNA repair proteins EXO1 and BRCA1; the interactions are increased following DNA damage induction.

The protein resides in the nucleus. It catalyses the reaction ATP + H2O = ADP + phosphate + H(+). The catalysed reaction is Couples ATP hydrolysis with the unwinding of duplex DNA at the replication fork by translocating in the 5'-3' direction. This creates two antiparallel DNA single strands (ssDNA). The leading ssDNA polymer is the template for DNA polymerase III holoenzyme which synthesizes a continuous strand.. In terms of biological role, 5'-3' DNA helicase which is recruited to sites of DNA damage and promotes repair of replication-blocking DNA lesions through stimulation of homologous recombination (HR). Promotes HR by directly stimulating RAD51-mediated strand exchange activity. Not required to load RAD51 at sites of DNA damage but promotes recombinational repair after RAD51 recruitment. Also promotes HR by positively regulating EXO1-mediated DNA end resection of double-strand breaks. Required for recruitment of replication protein RPA2 to DNA damage sites. Promotes the initiation of the G2/M checkpoint but not its maintenance. Catalyzes Holliday junction branch migration and dissociation of D-loops and DNA flaps. The chain is 5'-3' DNA helicase ZGRF1 (ZGRF1) from Homo sapiens (Human).